The chain runs to 312 residues: Protein-methionine-sulfoxide reductase catalytic subunit MsrP (312 aa).

The tat-type signal signal peptide spans Met-1–Ala-47. Mo-molybdopterin-binding positions include Asn-74, Tyr-77–Glu-78, Cys-133, Thr-168, Asn-216, Arg-221, and Ser-232–Lys-234.

It belongs to the MsrP family. Heterodimer of a catalytic subunit (MsrP) and a heme-binding subunit (MsrQ). Requires Mo-molybdopterin as cofactor. Predicted to be exported by the Tat system. The position of the signal peptide cleavage has not been experimentally proven.

Its subcellular location is the periplasm. It catalyses the reaction L-methionyl-[protein] + a quinone + H2O = L-methionyl-(R)-S-oxide-[protein] + a quinol. Its function is as follows. Part of the MsrPQ system that repairs oxidized periplasmic proteins containing methionine sulfoxide residues (Met-O), using respiratory chain electrons. Thus protects these proteins from oxidative-stress damage caused by reactive species of oxygen and chlorine generated by the host defense mechanisms. MsrPQ is essential for the maintenance of envelope integrity under bleach stress, rescuing a wide series of structurally unrelated periplasmic proteins from methionine oxidation. The catalytic subunit MsrP is non-stereospecific, being able to reduce both (R-) and (S-) diastereoisomers of methionine sulfoxide. Involved in protection against reactive chlorine species (RCS) generated by chlorite and hypochlorite. This is Protein-methionine-sulfoxide reductase catalytic subunit MsrP from Azospira oryzae (strain ATCC BAA-33 / DSM 13638 / PS) (Dechlorosoma suillum).